We begin with the raw amino-acid sequence, 20 residues long: Pregnancy-associated glycoprotein 60H (20 aa).

An N-linked (GlcNAc...) asparagine glycan is attached at Asn-4.

This sequence belongs to the peptidase A1 family. As to expression, chorionic epithelium (trophectoderm) and placental cotyledons.

It is found in the secreted. It localises to the extracellular space. This is Pregnancy-associated glycoprotein 60H from Bison bonasus (European bison).